A 214-amino-acid chain; its full sequence is Adenylate kinase (214 aa).

ATP is bound at residue 10 to 15; that stretch reads GAGKGT. The tract at residues 30 to 59 is NMP; that stretch reads STGDMLRAAVKAGTPLGLEAKKVMDAGQLV. Residues Thr-31, Arg-36, 57–59, 85–88, and Gln-92 each bind AMP; these read QLV and GFPR. Residues 122–159 are LID; it reads GRRVHSGSGRVYHVVFNPPKVEGKDDVTGEDLSIRPDD. ATP contacts are provided by residues Arg-123 and 132–133; that span reads VY. AMP contacts are provided by Arg-156 and Arg-167. Gln-200 is an ATP binding site.

The protein belongs to the adenylate kinase family. In terms of assembly, monomer.

It is found in the cytoplasm. The catalysed reaction is AMP + ATP = 2 ADP. Its pathway is purine metabolism; AMP biosynthesis via salvage pathway; AMP from ADP: step 1/1. Catalyzes the reversible transfer of the terminal phosphate group between ATP and AMP. Plays an important role in cellular energy homeostasis and in adenine nucleotide metabolism. This chain is Adenylate kinase, found in Shewanella denitrificans (strain OS217 / ATCC BAA-1090 / DSM 15013).